A 119-amino-acid chain; its full sequence is Holo-[acyl-carrier-protein] synthase (119 aa).

Positions 8 and 58 each coordinate Mg(2+).

It belongs to the P-Pant transferase superfamily. AcpS family. It depends on Mg(2+) as a cofactor.

The protein localises to the cytoplasm. It carries out the reaction apo-[ACP] + CoA = holo-[ACP] + adenosine 3',5'-bisphosphate + H(+). In terms of biological role, transfers the 4'-phosphopantetheine moiety from coenzyme A to a Ser of acyl-carrier-protein. The polypeptide is Holo-[acyl-carrier-protein] synthase (Bacillus cereus (strain ZK / E33L)).